Here is a 230-residue protein sequence, read N- to C-terminus: Protein-L-isoaspartate O-methyltransferase (230 aa).

Residue Ser-68 is part of the active site.

It belongs to the methyltransferase superfamily. L-isoaspartyl/D-aspartyl protein methyltransferase family.

The protein localises to the cytoplasm. It carries out the reaction [protein]-L-isoaspartate + S-adenosyl-L-methionine = [protein]-L-isoaspartate alpha-methyl ester + S-adenosyl-L-homocysteine. Catalyzes the methyl esterification of L-isoaspartyl residues in peptides and proteins that result from spontaneous decomposition of normal L-aspartyl and L-asparaginyl residues. It plays a role in the repair and/or degradation of damaged proteins. The polypeptide is Protein-L-isoaspartate O-methyltransferase (Salinibacter ruber (strain DSM 13855 / M31)).